Here is an 881-residue protein sequence, read N- to C-terminus: Phosphoinositide 3-kinase regulatory subunit 5 (881 aa).

Residues 23 to 99 (SRDAVSSRWA…APHIPPDSEL (77 aa)) are heterodimerization. Disordered stretches follow at residues 312–339 (PVASENEEDEEEEEEDVETDGCSPERDS) and 472–499 (PQAKPRIPARSRRAHSLPQHGLGQKLQT). Residues 316-330 (ENEEDEEEEEEDVET) are compositionally biased toward acidic residues. An interaction with G beta gamma proteins region spans residues 657 to 757 (PILADMILYY…WNDVEKVCTS (101 aa)).

In terms of assembly, heterodimer. Interacts with a catalytic subunit and with G beta gamma proteins.

It is found in the nucleus. The protein localises to the cytoplasm. It localises to the cell membrane. With respect to regulation, greatly activated by G gamma proteins. Regulatory subunit of the PI3K gamma complex. The polypeptide is Phosphoinositide 3-kinase regulatory subunit 5 (PIK3R5) (Gallus gallus (Chicken)).